The following is a 155-amino-acid chain: Transcriptional repressor NrdR (155 aa).

A disordered region spans residues 1–24; it reads MRCPYCGHEDSQVKDSRPTEDGAA. A zinc finger lies at 3–34; it reads CPYCGHEDSQVKDSRPTEDGAAIRRRRQCEDC. Residues 7 to 24 show a composition bias toward basic and acidic residues; the sequence is GHEDSQVKDSRPTEDGAA. Residues 49–139 form the ATP-cone domain; sequence VVVIKAGGTR…VYRDFTEARD (91 aa).

The protein belongs to the NrdR family. Requires Zn(2+) as cofactor.

Its function is as follows. Negatively regulates transcription of bacterial ribonucleotide reductase nrd genes and operons by binding to NrdR-boxes. In Sphingopyxis alaskensis (strain DSM 13593 / LMG 18877 / RB2256) (Sphingomonas alaskensis), this protein is Transcriptional repressor NrdR.